The chain runs to 513 residues: OTU domain-containing protein 5-A (513 aa).

2 disordered regions span residues 1 to 75 (MTIL…GGAG) and 99 to 136 (GPGHSKRRRQVLSAGPGATGNCPDTDDGAGNNSEDEYE). Residues 166–289 (FIIKQMKEDG…NIHYNSVVNP (124 aa)) enclose the OTU domain. The segment at 171–177 (MKEDGAC) is cys-loop. Aspartate 174 is an active-site residue. Cysteine 177 acts as the Nucleophile in catalysis. Residues 226-236 (KRKNNCHGNHI) are variable-loop. Residues 277–282 (YHRNIH) are his-loop. The active site involves histidine 282. Residues 387–446 (LEEWSGRSPRQRSTAGSPEHPDLHAELCMKPPSPGAPLILGKPPSPCAPGPSNQMSTGAD) form a disordered region.

It belongs to the peptidase C85 family.

The enzyme catalyses Thiol-dependent hydrolysis of ester, thioester, amide, peptide and isopeptide bonds formed by the C-terminal Gly of ubiquitin (a 76-residue protein attached to proteins as an intracellular targeting signal).. Deubiquitinating enzyme that may function as negative regulator of the innate immune system. Has peptidase activity towards 'Lys-48'- and 'Lys-63'-linked polyubiquitin chains. Can also cleave 'Lys-11'-linked ubiquitin chains (in vitro). This chain is OTU domain-containing protein 5-A (otud5-a), found in Xenopus laevis (African clawed frog).